A 173-amino-acid polypeptide reads, in one-letter code: Cell division protein SepF (173 aa).

The disordered stretch occupies residues 17–85 (SDDEYISDET…NELRTITTVH (69 aa)). Residues 35–52 (SAGGSSAAVSESGSTSVA) are compositionally biased toward low complexity.

Belongs to the SepF family. Homodimer. Interacts with FtsZ.

The protein resides in the cytoplasm. Its function is as follows. Cell division protein that is part of the divisome complex and is recruited early to the Z-ring. Probably stimulates Z-ring formation, perhaps through the cross-linking of FtsZ protofilaments. Its function overlaps with FtsA. In Kocuria rhizophila (strain ATCC 9341 / DSM 348 / NBRC 103217 / DC2201), this protein is Cell division protein SepF.